Consider the following 201-residue polypeptide: Ras-related protein Rab-1B (201 aa).

Methionine 1 is modified (N-acetylmethionine). 13 residues coordinate GTP: serine 17, glycine 18, valine 19, glycine 20, lysine 21, serine 22, cysteine 23, tyrosine 33, threonine 34, glutamate 35, serine 36, serine 39, and threonine 40. Serine 22 contributes to the Mg(2+) binding site. The Switch 1 motif lies at 30–45; it reads DDTYTESYISTIGVDF. Threonine 40 and aspartate 63 together coordinate Mg(2+). The tract at residues 64–83 is switch 2 region; Required for interaction with REP1/CHM; sequence TAGQERFRTITSSYYRGAHG. The Switch 2 motif lies at 65–80; it reads AGQERFRTITSSYYRG. GTP-binding residues include glycine 66, asparagine 121, lysine 122, aspartate 124, serine 151, alanine 152, and lysine 153. The interval 173 to 201 is disordered; that stretch reads MGPGAASGGERPNLKIDSTPVKQAGGGCC. 2 S-geranylgeranyl cysteine lipidation sites follow: cysteine 200 and cysteine 201. The residue at position 201 (cysteine 201) is a Cysteine methyl ester.

It belongs to the small GTPase superfamily. Rab family. Interacts with MICAL1 and MICAL2. Interacts (in GTP-bound form) with MICALCL, MICAL1 and MILCAL3. Interacts with GDI1; the interaction requires the GDP-bound state. Interacts with CHM/REP1; the interaction requires the GDP-bound form and is necessary for prenylation by GGTase II. Interacts with RabGAP TBC1D20. Interacts (in GDP-bound form) with lipid phosphatase MTMR6 (via GRAM domain); the interaction regulates MTMR6 recruitment to the endoplasmic reticulum-Golgi intermediate compartment. Interacts (in GDP-bound form) with lipid phosphatase MTMR7. The cofactor is Mg(2+). In terms of processing, prenylated; by GGTase II, only after interaction of the substrate with Rab escort protein 1 (REP1).

The protein resides in the cytoplasm. It is found in the membrane. Its subcellular location is the preautophagosomal structure membrane. The protein localises to the perinuclear region. The enzyme catalyses GTP + H2O = GDP + phosphate + H(+). With respect to regulation, regulated by guanine nucleotide exchange factors (GEFs) which promote the exchange of bound GDP for free GTP. Regulated by GTPase activating proteins (GAPs) including TBC1D20 which increases the GTP hydrolysis activity. Inhibited by GDP dissociation inhibitors (GDIs). In terms of biological role, the small GTPases Rab are key regulators of intracellular membrane trafficking, from the formation of transport vesicles to their fusion with membranes. Rabs cycle between an inactive GDP-bound form and an active GTP-bound form that is able to recruit to membranes different set of downstream effectors directly responsible for vesicle formation, movement, tethering and fusion. Plays a role in the initial events of the autophagic vacuole development which take place at specialized regions of the endoplasmic reticulum. Regulates vesicular transport between the endoplasmic reticulum and successive Golgi compartments. Required to modulate the compacted morphology of the Golgi. Promotes the recruitment of lipid phosphatase MTMR6 to the endoplasmic reticulum-Golgi intermediate compartment. The protein is Ras-related protein Rab-1B (RAB1B) of Bos taurus (Bovine).